A 681-amino-acid polypeptide reads, in one-letter code: Protein asunder (681 aa).

The tract at residues 574-619 is disordered; the sequence is PGASHLRSYTESPLSPERLEPTSSASNSSSSILKASKRRMSSSGQR. A Nuclear localization signal (NLS) motif is present at residues 606 to 612; it reads LKASKRR.

This sequence belongs to the Integrator subunit 13 family. Belongs to the multiprotein complex Integrator, at least composed of IntS1, IntS2, IntS3, IntS4, omd/IntS5, IntS6, defl/IntS7, IntS8, IntS9, IntS10, IntS11, IntS12, asun/IntS13, IntS14 and IntS15. The core complex associates with protein phosphatase 2A subunits mts/PP2A and Pp2A-29B, to form the Integrator-PP2A (INTAC) complex. In terms of processing, phosphorylated.

The protein localises to the nucleus. It is found in the cytoplasm. The protein resides in the perinuclear region. Component of the integrator complex, a multiprotein complex that terminates RNA polymerase II (Pol II) transcription in the promoter-proximal region of genes. The integrator complex provides a quality checkpoint during transcription elongation by driving premature transcription termination of transcripts that are unfavorably configured for transcriptional elongation: the complex terminates transcription by (1) catalyzing dephosphorylation of the C-terminal domain (CTD) of Pol II subunit Polr2A/Rbp1 and Spt5, and (2) degrading the exiting nascent RNA transcript via endonuclease activity. The integrator complex is also involved in the 3'-end processing of the U7 snRNA, and also the spliceosomal snRNAs U1, U2, U4 and U5. This is Protein asunder (asun) from Drosophila virilis (Fruit fly).